The sequence spans 222 residues: MAGAEPFLADGNQELFPCEVCGRRFAADVLERHGPICKKLFNRKRKPFSSLKQRLQGTDIPTVKKTPQSKSPPVRKSNWRQQHEDFINAIRSAKQCMLAIKEGRPLPPPPPPSLNPDYIQRPYCMRRFNESAAERHTNFCKDQSSRRVFNPAQTAAKLASRAQGRAQMGPKKEPTVTSAVGALLQNRVLVATNEVPTKSGLAMDPASGAKLRQGFSKSSKKD.

The segment at 14 to 43 (ELFPCEVCGRRFAADVLERHGPICKKLFNR) adopts a C2HC/C3H-type 1 zinc-finger fold. Residues Cys18, Cys21, His33, and Cys37 each coordinate Zn(2+). The segment at 48–78 (FSSLKQRLQGTDIPTVKKTPQSKSPPVRKSN) is disordered. The segment at 117 to 146 (DYIQRPYCMRRFNESAAERHTNFCKDQSSR) adopts a C2HC/C3H-type 2; degenerate zinc-finger fold. The interval 196 to 222 (PTKSGLAMDPASGAKLRQGFSKSSKKD) is disordered.

This sequence belongs to the ZC2HC1 family. It depends on Zn(2+) as a cofactor.

The protein is Zinc finger C2HC domain-containing protein 1B (ZC2HC1B) of Homo sapiens (Human).